Here is a 228-residue protein sequence, read N- to C-terminus: Sugar fermentation stimulation protein homolog (228 aa).

Belongs to the SfsA family.

This Psychromonas ingrahamii (strain DSM 17664 / CCUG 51855 / 37) protein is Sugar fermentation stimulation protein homolog.